We begin with the raw amino-acid sequence, 708 residues long: Potassium-transporting ATPase ATP-binding subunit 2 (708 aa).

Residues 1–23 are disordered; the sequence is MRSPSRLPHETRDSRQRTPKTDM. Residues 7–23 are compositionally biased toward basic and acidic residues; the sequence is LPHETRDSRQRTPKTDM. A run of 4 helical transmembrane segments spans residues 49–69, 84–104, 235–255, and 283–303; these read MFIVWVGTIVTFLVTLNPNLF, GLITLILFFTVLFANFAEAVA, IALTVLLAVLTQVFLIVVATM, and SIAILISLLVALIPTTIGGLL. The 4-aspartylphosphate intermediate role is filled by Asp339. ATP contacts are provided by residues Asp376, Glu380, 407–414, and Lys426; that span reads FSAKTRMS. Mg(2+) contacts are provided by Asp549 and Asp553. Helical transmembrane passes span 619–639, 645–665, and 683–703; these read FAILPTIFGAAGIGALNIMGL, AIISALIYNALIIPALIPLAL, and IFIYGLGGIIAPFIAIKLIDV.

The protein belongs to the cation transport ATPase (P-type) (TC 3.A.3) family. Type IA subfamily. The system is composed of three essential subunits: KdpA, KdpB and KdpC.

It localises to the cell inner membrane. The catalysed reaction is K(+)(out) + ATP + H2O = K(+)(in) + ADP + phosphate + H(+). Its function is as follows. Part of the high-affinity ATP-driven potassium transport (or Kdp) system, which catalyzes the hydrolysis of ATP coupled with the electrogenic transport of potassium into the cytoplasm. This subunit is responsible for energy coupling to the transport system and for the release of the potassium ions to the cytoplasm. The protein is Potassium-transporting ATPase ATP-binding subunit 2 of Nostoc sp. (strain PCC 7120 / SAG 25.82 / UTEX 2576).